We begin with the raw amino-acid sequence, 211 residues long: Endonuclease III (211 aa).

A HhH domain is found at 108–127; sequence REALEALAGVGRKTANVVLN. Residues cysteine 187, cysteine 194, cysteine 197, and cysteine 203 each coordinate [4Fe-4S] cluster.

This sequence belongs to the Nth/MutY family. [4Fe-4S] cluster serves as cofactor.

It catalyses the reaction 2'-deoxyribonucleotide-(2'-deoxyribose 5'-phosphate)-2'-deoxyribonucleotide-DNA = a 3'-end 2'-deoxyribonucleotide-(2,3-dehydro-2,3-deoxyribose 5'-phosphate)-DNA + a 5'-end 5'-phospho-2'-deoxyribonucleoside-DNA + H(+). DNA repair enzyme that has both DNA N-glycosylase activity and AP-lyase activity. The DNA N-glycosylase activity releases various damaged pyrimidines from DNA by cleaving the N-glycosidic bond, leaving an AP (apurinic/apyrimidinic) site. The AP-lyase activity cleaves the phosphodiester bond 3' to the AP site by a beta-elimination, leaving a 3'-terminal unsaturated sugar and a product with a terminal 5'-phosphate. The chain is Endonuclease III from Haemophilus influenzae (strain ATCC 51907 / DSM 11121 / KW20 / Rd).